The chain runs to 391 residues: Acetyl-CoA acetyltransferase (391 aa).

The Acyl-thioester intermediate role is filled by Cys-88. Catalysis depends on proton acceptor residues His-347 and Cys-377.

This sequence belongs to the thiolase-like superfamily. Thiolase family. As to quaternary structure, homotetramer.

It is found in the cytoplasm. It carries out the reaction 2 acetyl-CoA = acetoacetyl-CoA + CoA. The protein operates within metabolic intermediate biosynthesis; (R)-mevalonate biosynthesis; (R)-mevalonate from acetyl-CoA: step 1/3. The protein is Acetyl-CoA acetyltransferase (phaA) of Paracoccus denitrificans.